A 400-amino-acid polypeptide reads, in one-letter code: Subtilisin-like protease 7 (400 aa).

A signal peptide spans 1-20 (MGFITKAIPLALAAASVING). The propeptide occupies 21-119 (AEIMETRAGV…IERDARVQIN (99 aa)). Positions 36-118 (KYIVVMNDGM…YIERDARVQI (83 aa)) constitute an Inhibitor I9 domain. Asparagine 58 carries N-linked (GlcNAc...) asparagine glycosylation. In terms of domain architecture, Peptidase S8 spans 129–400 (SWGLARVGSK…SKLINNGSGM (272 aa)). Active-site charge relay system residues include aspartate 161 and histidine 192. 2 N-linked (GlcNAc...) asparagine glycosylation sites follow: asparagine 222 and asparagine 252. Serine 346 functions as the Charge relay system in the catalytic mechanism. A glycan (N-linked (GlcNAc...) asparagine) is linked at asparagine 396.

Belongs to the peptidase S8 family.

Its subcellular location is the secreted. In terms of biological role, secreted subtilisin-like serine protease with keratinolytic activity that contributes to pathogenicity. The sequence is that of Subtilisin-like protease 7 (SUB7) from Arthroderma benhamiae (Trichophyton mentagrophytes).